The following is a 151-amino-acid chain: Histone H2B.1 (151 aa).

Composition is skewed to basic and acidic residues over residues 1 to 28 (MAPK…EKAP) and 36 to 51 (EKRL…GEGK). Residues 1–58 (MAPKAEKKPAAKKPAEEEPATEKVEKAPAGKKPKAEKRLPAGKSKEGGEGKKGKKKAK) are disordered. N6-acetyllysine is present on residues lysine 7 and lysine 37. Lysine 147 is covalently cross-linked (Glycyl lysine isopeptide (Lys-Gly) (interchain with G-Cter in ubiquitin)).

Belongs to the histone H2B family. As to quaternary structure, the nucleosome is a histone octamer containing two molecules each of H2A, H2B, H3 and H4 assembled in one H3-H4 heterotetramer and two H2A-H2B heterodimers. The octamer wraps approximately 147 bp of DNA. In terms of processing, can be acetylated to form H2BK6ac and H2BK33ac. Monoubiquitinated to form H2BK143ub1; may give a specific tag for epigenetic transcriptional activation.

It localises to the nucleus. The protein resides in the chromosome. In terms of biological role, core component of nucleosome. Nucleosomes wrap and compact DNA into chromatin, limiting DNA accessibility to the cellular machineries which require DNA as a template. Histones thereby play a central role in transcription regulation, DNA repair, DNA replication and chromosomal stability. DNA accessibility is regulated via a complex set of post-translational modifications of histones, also called histone code, and nucleosome remodeling. This chain is Histone H2B.1, found in Zea mays (Maize).